We begin with the raw amino-acid sequence, 1059 residues long: Zinc finger protein 865 (1059 aa).

Disordered stretches follow at residues 1–24, 58–142, and 161–206; these read MEAN…EDGV, LPCA…DAAF, and NLKR…CDPT. A compositionally biased stretch (gly residues) spans 8-21; sequence SGAGGGGSSGIGGE. The span at 61–78 shows a compositional bias: pro residues; sequence APGPPPQPPPQPPPPQYD. Residues 93 to 119 show a composition bias toward low complexity; sequence SSSSSSSSSSSSSSSSSSSSSSSSSQA. 2 stretches are compositionally biased toward pro residues: residues 124–137 and 183–198; these read PPLP…PPPL and APGP…PGPP. C2H2-type zinc fingers lie at residues 224–246 and 252–274; these read FPCG…MLVH and YECG…RRCH. The disordered stretch occupies residues 275–342; it reads KDVPPAAGGP…PAGVGVPPPA (68 aa). Pro residues predominate over residues 281-296; that stretch reads AGGPPQPGPHLPPLGL. Composition is skewed to low complexity over residues 297 to 316 and 324 to 337; these read PAPA…SSGP and APSA…AGVG. 4 consecutive C2H2-type zinc fingers follow at residues 350–372, 378–400, 407–429, and 441–463; these read FACP…QIIH, FSCS…VKTH, LPCG…QAAH, and YPCD…KAAH. Positions 461-503 are disordered; sequence AAHAPPAAAAEAPKDGAASAPQPPPTFPPGPYLLPPDPPTTDS. A compositionally biased stretch (low complexity) spans 463–480; the sequence is HAPPAAAAEAPKDGAASA. Positions 481–499 are enriched in pro residues; the sequence is PQPPPTFPPGPYLLPPDPP. C2H2-type zinc fingers lie at residues 550 to 572, 578 to 600, 606 to 628, 669 to 691, and 697 to 719; these read FCCG…ERIH, HQCP…HVVH, YKCE…RQVH, YACS…KEVH, and YGCD…KLVH. The interval 726–747 is disordered; the sequence is LLPPAPGGLQPPDGSSGTDAAS. C2H2-type zinc fingers lie at residues 792 to 814, 820 to 842, 848 to 870, 876 to 898, 904 to 926, 932 to 954, 960 to 982, 989 to 1011, and 1017 to 1039; these read FSCA…KYVH, LGCG…RRSH, FRCP…QRCH, YRCG…RVVH, FKCG…RRLH, QRCS…QRLH, YRCE…QRAH, LRCP…LAAH, and FRCS…RLAH. A Glycyl lysine isopeptide (Lys-Gly) (interchain with G-Cter in SUMO2) cross-link involves residue Lys802. Residue Lys1040 forms a Glycyl lysine isopeptide (Lys-Gly) (interchain with G-Cter in SUMO2) linkage.

The protein belongs to the krueppel C2H2-type zinc-finger protein family.

The protein resides in the nucleus. May be involved in transcriptional regulation. This chain is Zinc finger protein 865 (ZNF865), found in Homo sapiens (Human).